Reading from the N-terminus, the 491-residue chain is Ketol-acid reductoisomerase (NADP(+)) (491 aa).

In terms of domain architecture, KARI N-terminal Rossmann spans 15 to 208 (AQLGKCRFMG…GGHRAGVLES (194 aa)). NADP(+)-binding positions include 45–48 (CGAQ), R68, R76, S78, and 108–110 (DKQ). H132 is an active-site residue. G158 is a binding site for NADP(+). KARI C-terminal knotted domains are found at residues 209–344 (SFVA…TAPQ) and 345–484 (YEGK…MTDM). Mg(2+) is bound by residues D217, E221, E389, and E393. S414 serves as a coordination point for substrate.

It belongs to the ketol-acid reductoisomerase family. Mg(2+) serves as cofactor.

It catalyses the reaction (2R)-2,3-dihydroxy-3-methylbutanoate + NADP(+) = (2S)-2-acetolactate + NADPH + H(+). The catalysed reaction is (2R,3R)-2,3-dihydroxy-3-methylpentanoate + NADP(+) = (S)-2-ethyl-2-hydroxy-3-oxobutanoate + NADPH + H(+). It participates in amino-acid biosynthesis; L-isoleucine biosynthesis; L-isoleucine from 2-oxobutanoate: step 2/4. It functions in the pathway amino-acid biosynthesis; L-valine biosynthesis; L-valine from pyruvate: step 2/4. Its function is as follows. Involved in the biosynthesis of branched-chain amino acids (BCAA). Catalyzes an alkyl-migration followed by a ketol-acid reduction of (S)-2-acetolactate (S2AL) to yield (R)-2,3-dihydroxy-isovalerate. In the isomerase reaction, S2AL is rearranged via a Mg-dependent methyl migration to produce 3-hydroxy-3-methyl-2-ketobutyrate (HMKB). In the reductase reaction, this 2-ketoacid undergoes a metal-dependent reduction by NADPH to yield (R)-2,3-dihydroxy-isovalerate. This chain is Ketol-acid reductoisomerase (NADP(+)), found in Escherichia coli (strain UTI89 / UPEC).